The chain runs to 404 residues: Multidrug resistance protein MdtG (404 aa).

A run of 11 helical transmembrane segments spans residues 19-39 (LGCF…PLYV), 56-76 (LVFS…GGLA), 90-110 (LGMA…QFLI), 113-133 (ALLG…ATQV), 144-164 (TLST…GLLA), 171-191 (PVFF…FFFI), 222-242 (LFVT…ILTL), 254-274 (IAFI…LSAP), 288-308 (ILIV…FVQT), 317-337 (FLLG…LVYN), and 376-396 (AVFC…WNSL).

It belongs to the major facilitator superfamily. DHA1 family. MdtG (TC 2.A.1.2.20) subfamily.

The protein localises to the cell inner membrane. The protein is Multidrug resistance protein MdtG of Salmonella heidelberg (strain SL476).